A 134-amino-acid polypeptide reads, in one-letter code: Profilin-3 (134 aa).

Residues C13 and C118 are joined by a disulfide bond. An Involved in PIP2 interaction motif is present at residues 84–100 (AVIRGKKGSGGITIKKT). T114 carries the phosphothreonine modification.

The protein belongs to the profilin family. As to quaternary structure, occurs in many kinds of cells as a complex with monomeric actin in a 1:1 ratio. Phosphorylated by MAP kinases.

It is found in the cytoplasm. Its subcellular location is the cytoskeleton. Binds to actin and affects the structure of the cytoskeleton. At high concentrations, profilin prevents the polymerization of actin, whereas it enhances it at low concentrations. The chain is Profilin-3 from Olea europaea (Common olive).